Consider the following 1400-residue polypeptide: RNA polymerase II-associated protein 1 (1400 aa).

Disordered stretches follow at residues 35 to 54 (KGSR…QDHR), 60 to 95 (DSLP…EERL), 161 to 215 (VSDN…GKGL), and 269 to 310 (REQT…DKLE). 2 stretches are compositionally biased toward basic and acidic residues: residues 39-54 (RRGD…QDHR) and 85-95 (LPHDEDPEERL). Positions 269 to 282 (REQTETKATKEQNP) are enriched in basic and acidic residues. Threonine 329 bears the Phosphothreonine mark. The tract at residues 504–539 (PSHDDKEDEDEDEELTKEKVNRKTPEEGSRPPPDLA) is disordered. The segment covering 509-518 (KEDEDEDEEL) has biased composition (acidic residues). Over residues 519–539 (TKEKVNRKTPEEGSRPPPDLA) the composition is skewed to basic and acidic residues.

The protein belongs to the RPAP1 family. Part of an RNA polymerase II complex that contains POLR2A, POLR2B, POLR2C, POLR2D, POLR2E, POLR2F, POLR2G, POLR2H, POLR2I, POLR2J, POLR2K, POLR2L, RPAP1, FCP1 plus the general transcription factors TFIIB and TFIIF.

It is found in the nucleus. Its function is as follows. Forms an interface between the RNA polymerase II enzyme and chaperone/scaffolding protein, suggesting that it is required to connect RNA polymerase II to regulators of protein complex formation. Required for interaction of the RNA polymerase II complex with acetylated histone H3. The protein is RNA polymerase II-associated protein 1 (Rpap1) of Rattus norvegicus (Rat).